The following is a 264-amino-acid chain: Phosphonoacetaldehyde hydrolase (264 aa).

The Nucleophile role is filled by aspartate 9. Mg(2+)-binding residues include aspartate 9 and alanine 11. The active-site Schiff-base intermediate with substrate is the lysine 50. Aspartate 183 is a binding site for Mg(2+).

The protein belongs to the HAD-like hydrolase superfamily. PhnX family. As to quaternary structure, homodimer. Mg(2+) serves as cofactor.

The catalysed reaction is phosphonoacetaldehyde + H2O = acetaldehyde + phosphate + H(+). Involved in phosphonate degradation. In Bacillus mycoides (strain KBAB4) (Bacillus weihenstephanensis), this protein is Phosphonoacetaldehyde hydrolase.